The chain runs to 246 residues: 2-C-methyl-D-erythritol 4-phosphate cytidylyltransferase (246 aa).

This sequence belongs to the IspD/TarI cytidylyltransferase family. IspD subfamily.

It carries out the reaction 2-C-methyl-D-erythritol 4-phosphate + CTP + H(+) = 4-CDP-2-C-methyl-D-erythritol + diphosphate. It functions in the pathway isoprenoid biosynthesis; isopentenyl diphosphate biosynthesis via DXP pathway; isopentenyl diphosphate from 1-deoxy-D-xylulose 5-phosphate: step 2/6. Its function is as follows. Catalyzes the formation of 4-diphosphocytidyl-2-C-methyl-D-erythritol from CTP and 2-C-methyl-D-erythritol 4-phosphate (MEP). The sequence is that of 2-C-methyl-D-erythritol 4-phosphate cytidylyltransferase from Chlorobaculum parvum (strain DSM 263 / NCIMB 8327) (Chlorobium vibrioforme subsp. thiosulfatophilum).